A 434-amino-acid chain; its full sequence is Serine hydroxymethyltransferase (434 aa).

(6S)-5,6,7,8-tetrahydrofolate-binding positions include L128 and 132–134; that span reads GHL. Position 237 is an N6-(pyridoxal phosphate)lysine (K237).

The protein belongs to the SHMT family. Homodimer. Requires pyridoxal 5'-phosphate as cofactor.

The protein resides in the cytoplasm. The catalysed reaction is (6R)-5,10-methylene-5,6,7,8-tetrahydrofolate + glycine + H2O = (6S)-5,6,7,8-tetrahydrofolate + L-serine. It functions in the pathway one-carbon metabolism; tetrahydrofolate interconversion. The protein operates within amino-acid biosynthesis; glycine biosynthesis; glycine from L-serine: step 1/1. Catalyzes the reversible interconversion of serine and glycine with tetrahydrofolate (THF) serving as the one-carbon carrier. This reaction serves as the major source of one-carbon groups required for the biosynthesis of purines, thymidylate, methionine, and other important biomolecules. Also exhibits THF-independent aldolase activity toward beta-hydroxyamino acids, producing glycine and aldehydes, via a retro-aldol mechanism. This is Serine hydroxymethyltransferase from Corynebacterium glutamicum (strain R).